The sequence spans 234 residues: Opacity protein opA65 (234 aa).

Ala1 is a signal peptide. The disordered stretch occupies residues 154–179 (TVTPKPKNGTQGGPVKSTSPIPAYHE).

Belongs to the opacity porin family.

Its subcellular location is the cell outer membrane. Its function is as follows. Implicated in a number of adherence functions. OPA proteins are implicated in pathogenesis and are subject to phase variation. The chain is Opacity protein opA65 from Neisseria gonorrhoeae.